Here is a 72-residue protein sequence, read N- to C-terminus: Bradykinin-potentiating peptide BmKbpp (72 aa).

The first 22 residues, 1 to 22, serve as a signal peptide directing secretion; that stretch reads MNKKTLLVIFFVTMLIVDEVNS. Positions 70–72 are excised as a propeptide; that stretch reads RRR.

It belongs to the non-disulfide-bridged peptide (NDBP) superfamily. Long chain multifunctional peptide (group 2) family. In terms of tissue distribution, expressed by the venom gland.

The protein resides in the secreted. Amphipathic peptide that shows bradykinin potentiating activity and antimicrobial activities against bacteria and fungi. Has higher antibacterial activities against Gram-negative than against Gram-positive bacteria. Also inhibits NADPH oxidase-dependent superoxide production (IC(50) is 0.4 uM on granulocytes stimulated with PMA, IC(50) is 0.51 uM on HL-60 cells undifferentiated and IC(50) is 0.53 uM on HL-60 cells treated with DMSO). The C-terminal peptide shows a higher bradykinin potentiating activity than the complete peptide. The protein is Bradykinin-potentiating peptide BmKbpp of Olivierus martensii (Manchurian scorpion).